A 116-amino-acid chain; its full sequence is Large ribosomal subunit protein bL17 (116 aa).

It belongs to the bacterial ribosomal protein bL17 family. As to quaternary structure, part of the 50S ribosomal subunit. Contacts protein L32.

The protein is Large ribosomal subunit protein bL17 of Helicobacter hepaticus (strain ATCC 51449 / 3B1).